We begin with the raw amino-acid sequence, 1301 residues long: DNA-directed RNA polymerase subunit beta (1301 aa).

It belongs to the RNA polymerase beta chain family. In terms of assembly, in plastids the minimal PEP RNA polymerase catalytic core is composed of four subunits: alpha, beta, beta', and beta''. When a (nuclear-encoded) sigma factor is associated with the core the holoenzyme is formed, which can initiate transcription.

Its subcellular location is the plastid. It is found in the chloroplast. It carries out the reaction RNA(n) + a ribonucleoside 5'-triphosphate = RNA(n+1) + diphosphate. DNA-dependent RNA polymerase catalyzes the transcription of DNA into RNA using the four ribonucleoside triphosphates as substrates. This is DNA-directed RNA polymerase subunit beta from Chlorella vulgaris (Green alga).